Reading from the N-terminus, the 191-residue chain is Fe/S biogenesis protein NfuA (191 aa).

C149 and C152 together coordinate [4Fe-4S] cluster.

The protein belongs to the NfuA family. As to quaternary structure, homodimer. [4Fe-4S] cluster is required as a cofactor.

Involved in iron-sulfur cluster biogenesis. Binds a 4Fe-4S cluster, can transfer this cluster to apoproteins, and thereby intervenes in the maturation of Fe/S proteins. Could also act as a scaffold/chaperone for damaged Fe/S proteins. The chain is Fe/S biogenesis protein NfuA from Klebsiella pneumoniae (strain 342).